Here is a 441-residue protein sequence, read N- to C-terminus: Ribulose bisphosphate carboxylase large chain (441 aa).

Lysine 5 bears the N6,N6,N6-trimethyllysine mark. Substrate-binding residues include asparagine 114 and threonine 164. Lysine 166 serves as the catalytic Proton acceptor. Lysine 168 is a binding site for substrate. Mg(2+)-binding residues include lysine 192, aspartate 194, and glutamate 195. Lysine 192 carries the post-translational modification N6-carboxylysine. The active-site Proton acceptor is the histidine 285. Substrate-binding residues include arginine 286, histidine 318, and serine 370.

It belongs to the RuBisCO large chain family. Type I subfamily. As to quaternary structure, heterohexadecamer of 8 large chains and 8 small chains; disulfide-linked. The disulfide link is formed within the large subunit homodimers. The cofactor is Mg(2+). The disulfide bond which can form in the large chain dimeric partners within the hexadecamer appears to be associated with oxidative stress and protein turnover.

Its subcellular location is the plastid. It localises to the chloroplast. It carries out the reaction 2 (2R)-3-phosphoglycerate + 2 H(+) = D-ribulose 1,5-bisphosphate + CO2 + H2O. It catalyses the reaction D-ribulose 1,5-bisphosphate + O2 = 2-phosphoglycolate + (2R)-3-phosphoglycerate + 2 H(+). In terms of biological role, ruBisCO catalyzes two reactions: the carboxylation of D-ribulose 1,5-bisphosphate, the primary event in carbon dioxide fixation, as well as the oxidative fragmentation of the pentose substrate in the photorespiration process. Both reactions occur simultaneously and in competition at the same active site. This Pellaea andromedifolia (Coffee fern) protein is Ribulose bisphosphate carboxylase large chain.